A 201-amino-acid polypeptide reads, in one-letter code: Recombination protein RecR (201 aa).

The C4-type zinc finger occupies 57-72 (CADCRTFTEQEKCNIC). The Toprim domain maps to 81 to 176 (GQICVVESPA…DASRIAHGVP (96 aa)).

It belongs to the RecR family.

In terms of biological role, may play a role in DNA repair. It seems to be involved in an RecBC-independent recombinational process of DNA repair. It may act with RecF and RecO. This chain is Recombination protein RecR, found in Cronobacter sakazakii (strain ATCC BAA-894) (Enterobacter sakazakii).